We begin with the raw amino-acid sequence, 365 residues long: Aminomethyltransferase (365 aa).

It belongs to the GcvT family. The glycine cleavage system is composed of four proteins: P, T, L and H.

It catalyses the reaction N(6)-[(R)-S(8)-aminomethyldihydrolipoyl]-L-lysyl-[protein] + (6S)-5,6,7,8-tetrahydrofolate = N(6)-[(R)-dihydrolipoyl]-L-lysyl-[protein] + (6R)-5,10-methylene-5,6,7,8-tetrahydrofolate + NH4(+). In terms of biological role, the glycine cleavage system catalyzes the degradation of glycine. In Yersinia enterocolitica serotype O:8 / biotype 1B (strain NCTC 13174 / 8081), this protein is Aminomethyltransferase.